We begin with the raw amino-acid sequence, 637 residues long: GTP-binding protein 4 (637 aa).

Alanine 2 carries the post-translational modification N-acetylalanine. Position 103 is an N6-acetyllysine; alternate (lysine 103). Lysine 103 participates in a covalent cross-link: Glycyl lysine isopeptide (Lys-Gly) (interchain with G-Cter in SUMO2); alternate. A Phosphoserine modification is found at serine 122. One can recognise an OBG-type G domain in the interval 169–340 (RTLLLCGYPN…VKTEACDRLL (172 aa)). Residues 175-182 (GYPNVGKS), 221-225 (DTPGI), and 289-292 (SKCE) each bind GTP. A Glycyl lysine isopeptide (Lys-Gly) (interchain with G-Cter in SUMO2) cross-link involves residue lysine 332. 2 disordered regions span residues 499–518 (SKEK…KVQR) and 525–637 (MRSL…KERR). A Glycyl lysine isopeptide (Lys-Gly) (interchain with G-Cter in SUMO2) cross-link involves residue lysine 535. Basic residues predominate over residues 542–555 (VRARRSRSVTRKRK). Residue serine 559 is modified to Phosphoserine. The segment covering 563–574 (SSIARSRSRSCS) has biased composition (low complexity). Positions 576-588 (TPRDVSGLRDVKM) are enriched in basic and acidic residues. Over residues 589–607 (VKKAKTMMKKAQKKMNRLG) the composition is skewed to basic residues. A compositionally biased stretch (basic and acidic residues) spans 608–621 (KKGEADRHVFDMKP). Residues 622-637 (KHLLSGKRKAGKKERR) are compositionally biased toward basic residues.

The protein belongs to the TRAFAC class OBG-HflX-like GTPase superfamily. OBG GTPase family. NOG subfamily. Associates with pre-60S ribosomal particles. Interacts with MINAS-60 (product of an alternative open reading frame of RBM10).

It localises to the nucleus. Its subcellular location is the nucleolus. Involved in the biogenesis of the 60S ribosomal subunit. Acts as TP53 repressor, preventing TP53 stabilization and cell cycle arrest. The polypeptide is GTP-binding protein 4 (Gtpbp4) (Rattus norvegicus (Rat)).